Here is a 157-residue protein sequence, read N- to C-terminus: uncharacterized protein (157 aa).

Residues 33–134 enclose the HD domain; it reads NLKHFLDVAR…MYRADKLSRL (102 aa).

This is an uncharacterized protein from Clostridium beijerinckii (strain ATCC 51743 / NCIMB 8052) (Clostridium acetobutylicum).